We begin with the raw amino-acid sequence, 127 residues long: Small ribosomal subunit protein uS13 (127 aa).

Residues proline 97–arginine 127 form a disordered region. Basic residues predominate over residues glutamine 101–alanine 118.

This sequence belongs to the universal ribosomal protein uS13 family. As to quaternary structure, part of the 30S ribosomal subunit. Forms a loose heterodimer with protein S19. Forms two bridges to the 50S subunit in the 70S ribosome.

In terms of biological role, located at the top of the head of the 30S subunit, it contacts several helices of the 16S rRNA. In the 70S ribosome it contacts the 23S rRNA (bridge B1a) and protein L5 of the 50S subunit (bridge B1b), connecting the 2 subunits; these bridges are implicated in subunit movement. Contacts the tRNAs in the A and P-sites. The chain is Small ribosomal subunit protein uS13 from Rhodopirellula baltica (strain DSM 10527 / NCIMB 13988 / SH1).